A 954-amino-acid polypeptide reads, in one-letter code: cGMP-specific 3',5'-cyclic phosphodiesterase alpha (954 aa).

Over 1-259 (MMDTKVDQTI…NTFYSSFPFK (259 aa)) the chain is Cytoplasmic. The helical transmembrane segment at 260–280 (LFLHSLYMIFICFIYFVVLYF) threads the bilayer. Residues 281 to 296 (MLLKKIYTHPFIFHLS) lie on the Extracellular side of the membrane. A helical membrane pass occupies residues 297–317 (VLKFLFDIIFFLSFILYPLFL). The Cytoplasmic segment spans residues 318–327 (RLKRIDKIIY). Residues 328–348 (SSYISSYIFVCVTFLYSFIIF) form a helical membrane-spanning segment. Over 349–365 (KCSSYSVKMNSNTYQNN) the chain is Extracellular. The helical transmembrane segment at 366-386 (FVFQNMLFLLINIIYICIFCF) threads the bilayer. Topologically, residues 387 to 401 (LKNYMILYSFLYNCR) are cytoplasmic. The helical transmembrane segment at 402 to 422 (FSIFCILFIFLYYYLFFSLDF) threads the bilayer. At 423–432 (YRIIHLPLDN) the chain is on the extracellular side. The chain crosses the membrane as a helical span at residues 433 to 453 (FFFPFLCFLFFSFLFIFKIIM). Residues 454–954 (SLYYEYVYEK…LSKLELIKFE (501 aa)) lie on the Cytoplasmic side of the membrane. In terms of domain architecture, PDEase spans 586–930 (NQEETKSFLS…ERWESHKNDN (345 aa)). H680 functions as the Proton donor in the catalytic mechanism. 680–684 (HTSLH) provides a ligand contact to 3',5'-cyclic GMP. Zn(2+) is bound by residues H684, H720, D721, and D832. 3 residues coordinate 3',5'-cyclic GMP: D721, D832, and Q884. Mg(2+) is bound at residue D721.

It belongs to the cyclic nucleotide phosphodiesterase family. The cofactor is Zn(2+). Mg(2+) serves as cofactor.

The protein resides in the membrane. It catalyses the reaction 3',5'-cyclic GMP + H2O = GMP + H(+). The protein operates within purine metabolism; 3',5'-cyclic GMP degradation; GMP from 3',5'-cyclic GMP: step 1/1. Not inhibited by cAMP. Inhibited by zaprinast. Specifically hydrolyzes the second messenger cGMP, which is a key regulator of many important physiological processes. The polypeptide is cGMP-specific 3',5'-cyclic phosphodiesterase alpha (Plasmodium falciparum (isolate 3D7)).